Here is a 644-residue protein sequence, read N- to C-terminus: Exoribonuclease 2 (644 aa).

The RNB domain maps to 189-516 (REDLTALDFV…NHRLLKAVIK (328 aa)). An S1 motif domain is found at 561-643 (DTRFAAEIVD…ETRSIIARPV (83 aa)).

The protein belongs to the RNR ribonuclease family. RNase II subfamily.

It localises to the cytoplasm. The enzyme catalyses Exonucleolytic cleavage in the 3'- to 5'-direction to yield nucleoside 5'-phosphates.. Its function is as follows. Involved in mRNA degradation. Hydrolyzes single-stranded polyribonucleotides processively in the 3' to 5' direction. The protein is Exoribonuclease 2 of Escherichia coli (strain UTI89 / UPEC).